The following is a 719-amino-acid chain: DNA ligase (719 aa).

Residues 42–46 (DAAYD), 92–93 (SL), and Glu-126 each bind NAD(+). Residue Lys-128 is the N6-AMP-lysine intermediate of the active site. Residues Arg-149, Glu-185, Lys-301, and Lys-325 each coordinate NAD(+). 4 residues coordinate Zn(2+): Cys-430, Cys-433, Cys-448, and Cys-454. The region spanning 640-719 (ATGSPVEGKT…DDWFKLVGED (80 aa)) is the BRCT domain.

The protein belongs to the NAD-dependent DNA ligase family. LigA subfamily. The cofactor is Mg(2+). Mn(2+) is required as a cofactor.

It carries out the reaction NAD(+) + (deoxyribonucleotide)n-3'-hydroxyl + 5'-phospho-(deoxyribonucleotide)m = (deoxyribonucleotide)n+m + AMP + beta-nicotinamide D-nucleotide.. DNA ligase that catalyzes the formation of phosphodiester linkages between 5'-phosphoryl and 3'-hydroxyl groups in double-stranded DNA using NAD as a coenzyme and as the energy source for the reaction. It is essential for DNA replication and repair of damaged DNA. The sequence is that of DNA ligase from Brucella ovis (strain ATCC 25840 / 63/290 / NCTC 10512).